A 299-amino-acid chain; its full sequence is tRNA(Met) cytidine acetate ligase (299 aa).

ATP-binding positions include 6–19 (IAEY…HIYM), glycine 100, asparagine 157, and arginine 182.

The protein belongs to the TmcAL family.

The protein localises to the cytoplasm. The catalysed reaction is cytidine(34) in elongator tRNA(Met) + acetate + ATP = N(4)-acetylcytidine(34) in elongator tRNA(Met) + AMP + diphosphate. Its function is as follows. Catalyzes the formation of N(4)-acetylcytidine (ac(4)C) at the wobble position of elongator tRNA(Met), using acetate and ATP as substrates. First activates an acetate ion to form acetyladenylate (Ac-AMP) and then transfers the acetyl group to tRNA to form ac(4)C34. This Mycoplasma mobile (strain ATCC 43663 / 163K / NCTC 11711) (Mesomycoplasma mobile) protein is tRNA(Met) cytidine acetate ligase.